A 242-amino-acid polypeptide reads, in one-letter code: MEGWQRAFVLHSRPWSETSLMLDVFTEESGRVRLVAKGARSKRSTLKGALQPFTPLLLRFGGRGEVKTLRSAEAVSLALPLSGITLYSGLYINELLSRVLEYETRFSELFFDYLHCIQSLAGATGTPEPALRRFELALLGHLGYGVNFTYCAGSGEPVDDTMTYRYREEKGFIASVVIDNKTFTGRQLKALNAREFPDADTLRAAKRFTRMALKPYLGGKPLKSRELFRQFMPKRTVKTHYE.

Belongs to the RecO family. As to quaternary structure, monomer.

In terms of biological role, involved in DNA repair and RecF pathway recombination. The protein is DNA repair protein RecO of Shigella boydii serotype 18 (strain CDC 3083-94 / BS512).